The chain runs to 195 residues: Imidazole glycerol phosphate synthase subunit HisH 2 (195 aa).

Positions 2–195 constitute a Glutamine amidotransferase type-1 domain; sequence KIIIIDTACA…LISNFIKDIG (194 aa). Cysteine 77 serves as the catalytic Nucleophile. Catalysis depends on residues histidine 175 and glutamate 177.

Heterodimer of HisH and HisF.

It localises to the cytoplasm. It catalyses the reaction 5-[(5-phospho-1-deoxy-D-ribulos-1-ylimino)methylamino]-1-(5-phospho-beta-D-ribosyl)imidazole-4-carboxamide + L-glutamine = D-erythro-1-(imidazol-4-yl)glycerol 3-phosphate + 5-amino-1-(5-phospho-beta-D-ribosyl)imidazole-4-carboxamide + L-glutamate + H(+). The enzyme catalyses L-glutamine + H2O = L-glutamate + NH4(+). Its pathway is amino-acid biosynthesis; L-histidine biosynthesis; L-histidine from 5-phospho-alpha-D-ribose 1-diphosphate: step 5/9. IGPS catalyzes the conversion of PRFAR and glutamine to IGP, AICAR and glutamate. The HisH subunit provides the glutamine amidotransferase activity that produces the ammonia necessary to HisF for the synthesis of IGP and AICAR. In Campylobacter jejuni subsp. jejuni serotype O:2 (strain ATCC 700819 / NCTC 11168), this protein is Imidazole glycerol phosphate synthase subunit HisH 2 (hisH2).